We begin with the raw amino-acid sequence, 67 residues long: uncharacterized protein (67 aa).

This is an uncharacterized protein from Fowlpox virus (strain NVSL) (FPV).